Reading from the N-terminus, the 82-residue chain is Small ribosomal subunit protein bS16 (82 aa).

This sequence belongs to the bacterial ribosomal protein bS16 family.

This is Small ribosomal subunit protein bS16 from Gloeothece citriformis (strain PCC 7424) (Cyanothece sp. (strain PCC 7424)).